Here is a 199-residue protein sequence, read N- to C-terminus: uncharacterized protein (199 aa).

The next 3 helical transmembrane spans lie at 27–47, 55–75, and 172–192; these read LIKI…PILA, LLTL…VAAL, and LLLL…VLLL.

It is found in the cell membrane. This is an uncharacterized protein from Synechocystis sp. (strain ATCC 27184 / PCC 6803 / Kazusa).